The following is a 321-amino-acid chain: Nucleus-vacuole junction protein 1 (321 aa).

An N-terminal signal peptide occupies residues methionine 1–glycine 22. The tract at residues glutamate 73–asparagine 125 is TSC13-binding. Residues isoleucine 94–glycine 114 form a helical membrane-spanning segment. The tract at residues lysine 139 to asparagine 195 is OSH1-binding. A phosphoserine mark is found at serine 156 and serine 199. The disordered stretch occupies residues leucine 211 to isoleucine 275. The interval aspartate 233–tyrosine 321 is VAC8-binding. Positions serine 242–arginine 262 are enriched in basic and acidic residues. The span at threonine 263 to serine 272 shows a compositional bias: low complexity. A phosphoserine mark is found at serine 285 and serine 298. Positions proline 299–tyrosine 321 are disordered.

In terms of assembly, interacts with OSH1, TSC13 and VAC8.

Its subcellular location is the nucleus outer membrane. In terms of biological role, involved in the formation of nucleus-vacuole junctions (NVJs) during piecemeal microautophagy of the nucleus (PMN). NVJs are interorganelle interfaces mediated by NVJ1 in the nuclear envelope and VAC8 on the vacuole membrane. Together, NVJ1 and VAC8 form Velcro-like patches through which teardrop-like portions of the nucleus are pinched off into the vacuolar lumen and degraded by the PMN process. Also acts as an outer-nuclear membrane receptor for OSH1 and TSC13. This chain is Nucleus-vacuole junction protein 1 (NVJ1), found in Saccharomyces cerevisiae (strain ATCC 204508 / S288c) (Baker's yeast).